A 515-amino-acid polypeptide reads, in one-letter code: Zinc-binding protein AdcA (515 aa).

The N-terminal stretch at 1–28 is a signal peptide; the sequence is MKKKILLMMSLISVFFAWQLTQAKQVLA. Position 66 (histidine 66) interacts with Zn(2+). The interval 126–148 is disordered; the sequence is HHHEEADKKHEHNKHSEEGHNHA. The his-rich loop stretch occupies residues 129–148; that stretch reads EEADKKHEHNKHSEEGHNHA. Positions 152, 216, and 291 each coordinate Zn(2+).

The protein belongs to the bacterial solute-binding protein 9 family.

Its function is as follows. Part of the ATP-binding cassette (ABC) transport system AdcABC involved in zinc import. Binds zinc with high affinity and specificity and delivers it to the membrane permease for translocation into the cytoplasm. The chain is Zinc-binding protein AdcA (adcA) from Streptococcus pyogenes serotype M3 (strain ATCC BAA-595 / MGAS315).